Here is a 381-residue protein sequence, read N- to C-terminus: Alkanesulfonate monooxygenase (381 aa).

It belongs to the SsuD family. In terms of assembly, homotetramer.

It catalyses the reaction an alkanesulfonate + FMNH2 + O2 = an aldehyde + FMN + sulfite + H2O + 2 H(+). In terms of biological role, catalyzes the desulfonation of aliphatic sulfonates. The chain is Alkanesulfonate monooxygenase from Escherichia coli O7:K1 (strain IAI39 / ExPEC).